Here is an 879-residue protein sequence, read N- to C-terminus: uncharacterized protein (879 aa).

Residues 14-34 traverse the membrane as a helical segment; the sequence is LAFFGCGVSVGAFFTLFLMGT.

The protein localises to the membrane. This is an uncharacterized protein from Mycoplasma pneumoniae (strain ATCC 29342 / M129 / Subtype 1) (Mycoplasmoides pneumoniae).